The chain runs to 353 residues: MTAILERRDSETLWGRFCNWITSTENRLYIGWFGVLMIPTLLTATSVFIIAFIAAPPVDIDGIREPVSGSLLYGNNIICGAIIPTSAAIGLHFYPIWEAASVDEWLYNGGPYELIVLHFLLGVACYMGREWELSFRLGMRPWIAVAYSAPVAAATAVFLIYPIGQGSFSDGMPLGISGTFNFMIVFQAEHNILMHPFHMLGVAGVFGGSLFSAMHGSLVTSSLIRETTENESANEGYRFGQEEETYNIVAAHGYFGRLIFQYASFNNSRSLHFFLAAWPVVGIWFTALGISTMAFNLNGFNFNQSVVDSQGRVINTWADIINRANLGMEVMHERNAHNFPLDLAAVEAPSING.

At Thr-2 the chain carries N-acetylthreonine. Thr-2 bears the Phosphothreonine mark. Helical transmembrane passes span 29–46 (YIGWFGVLMIPTLLTATS), 118–133 (HFLLGVACYMGREWEL), and 142–156 (WIAVAYSAPVAAATA). His-118 contacts chlorophyll a. Tyr-126 is a pheophytin a binding site. [CaMn4O5] cluster-binding residues include Asp-170 and Glu-189. Residues 197 to 218 (FHMLGVAGVFGGSLFSAMHGSL) traverse the membrane as a helical segment. His-198 is a binding site for chlorophyll a. A quinone contacts are provided by residues His-215 and 264–265 (SF). Residue His-215 coordinates Fe cation. Residue His-272 coordinates Fe cation. Residues 274–288 (FLAAWPVVGIWFTAL) form a helical membrane-spanning segment. Positions 332, 333, 342, and 344 each coordinate [CaMn4O5] cluster. The propeptide occupies 345–353 (AVEAPSING).

This sequence belongs to the reaction center PufL/M/PsbA/D family. In terms of assembly, PSII is composed of 1 copy each of membrane proteins PsbA, PsbB, PsbC, PsbD, PsbE, PsbF, PsbH, PsbI, PsbJ, PsbK, PsbL, PsbM, PsbT, PsbX, PsbY, PsbZ, Psb30/Ycf12, at least 3 peripheral proteins of the oxygen-evolving complex and a large number of cofactors. It forms dimeric complexes. The D1/D2 heterodimer binds P680, chlorophylls that are the primary electron donor of PSII, and subsequent electron acceptors. It shares a non-heme iron and each subunit binds pheophytin, quinone, additional chlorophylls, carotenoids and lipids. D1 provides most of the ligands for the Mn4-Ca-O5 cluster of the oxygen-evolving complex (OEC). There is also a Cl(-1) ion associated with D1 and D2, which is required for oxygen evolution. The PSII complex binds additional chlorophylls, carotenoids and specific lipids. serves as cofactor. Tyr-161 forms a radical intermediate that is referred to as redox-active TyrZ, YZ or Y-Z. Post-translationally, C-terminally processed by CTPA; processing is essential to allow assembly of the oxygen-evolving complex and thus photosynthetic growth.

It localises to the plastid. Its subcellular location is the chloroplast thylakoid membrane. It catalyses the reaction 2 a plastoquinone + 4 hnu + 2 H2O = 2 a plastoquinol + O2. Its function is as follows. Photosystem II (PSII) is a light-driven water:plastoquinone oxidoreductase that uses light energy to abstract electrons from H(2)O, generating O(2) and a proton gradient subsequently used for ATP formation. It consists of a core antenna complex that captures photons, and an electron transfer chain that converts photonic excitation into a charge separation. The D1/D2 (PsbA/PsbD) reaction center heterodimer binds P680, the primary electron donor of PSII as well as several subsequent electron acceptors. This chain is Photosystem II protein D1, found in Medicago sativa (Alfalfa).